A 155-amino-acid polypeptide reads, in one-letter code: Gas vesicle protein K (155 aa).

This sequence belongs to the gas vesicle GvpK family.

The protein localises to the gas vesicle. In terms of biological role, might be involved in nucleating gas vesicle formation. Gas vesicles (GV) are hollow, gas filled proteinaceous nanostructures. During planktonic growth they allow positioning of the organism at a favorable depth for light or nutrient acquisition. The sequence is that of Gas vesicle protein K from Dolichospermum flosaquae (Anabaena flos-aquae).